Reading from the N-terminus, the 152-residue chain is MAGEKTRKILVDNRKARFEYEILETYSAGLALLGTEVKAIRAGRANLNDAFARIHHGEVLLYNMNISPLQTAGAFAHDPLRTRKLLLKRREIHKLTGRVEEKGLTLIPLKLYLEGSWVKLDLGLARGKKLYDKREDIKKRETKRDIERAMRR.

This sequence belongs to the SmpB family.

Its subcellular location is the cytoplasm. In terms of biological role, required for rescue of stalled ribosomes mediated by trans-translation. Binds to transfer-messenger RNA (tmRNA), required for stable association of tmRNA with ribosomes. tmRNA and SmpB together mimic tRNA shape, replacing the anticodon stem-loop with SmpB. tmRNA is encoded by the ssrA gene; the 2 termini fold to resemble tRNA(Ala) and it encodes a 'tag peptide', a short internal open reading frame. During trans-translation Ala-aminoacylated tmRNA acts like a tRNA, entering the A-site of stalled ribosomes, displacing the stalled mRNA. The ribosome then switches to translate the ORF on the tmRNA; the nascent peptide is terminated with the 'tag peptide' encoded by the tmRNA and targeted for degradation. The ribosome is freed to recommence translation, which seems to be the essential function of trans-translation. The protein is SsrA-binding protein of Gloeobacter violaceus (strain ATCC 29082 / PCC 7421).